A 437-amino-acid polypeptide reads, in one-letter code: GTPase Der (437 aa).

2 consecutive EngA-type G domains span residues 3-168 (PLIA…PCPE) and 178-353 (IKLA…LNRR). GTP is bound by residues 9–16 (GRPNVGKS), 56–60 (DTGGY), 120–123 (NKVD), 184–191 (GRPNVGKS), 231–235 (DTAGL), and 296–299 (NKWD). In terms of domain architecture, KH-like spans 354 to 437 (QKISTSNLNR…IPITMRFLRK (84 aa)).

This sequence belongs to the TRAFAC class TrmE-Era-EngA-EngB-Septin-like GTPase superfamily. EngA (Der) GTPase family. As to quaternary structure, associates with the 50S ribosomal subunit.

In terms of biological role, GTPase that plays an essential role in the late steps of ribosome biogenesis. The protein is GTPase Der of Chlorobaculum tepidum (strain ATCC 49652 / DSM 12025 / NBRC 103806 / TLS) (Chlorobium tepidum).